The following is a 142-amino-acid chain: Glutamate-rich protein 2 (142 aa).

2 disordered regions span residues 1–55 (MSKN…HAPL) and 104–142 (EKAQ…CEDG). Residues 9–27 (EQEKNNEHCPEDINDKLSE) show a composition bias toward basic and acidic residues. Residues 28 to 43 (STDDDGEDTSDEDKEE) are compositionally biased toward acidic residues. Residues 44–53 (DSNPNKDTHA) are compositionally biased toward basic and acidic residues. Positions 109–142 (LEEDDDESEEDNSESEGESTEDPSEESSDECEDG) are enriched in acidic residues.

The protein is Glutamate-rich protein 2 (ERICH2) of Bos taurus (Bovine).